A 301-amino-acid polypeptide reads, in one-letter code: MKIAILSRNPRLYSTRRLVEAGEQLGHEVDVIDTMHCYMDITSSNPSVRYDGKPLPKYDAVIPRIGASVTFYGTAVVRQFEMMGTYSINESVAISRSRDKLRSLQLMSRKGLGLPKTGFAHHPDKIGDLLKNVGGAPVVIKLLEGTQGIGVVLAESNKTAESIIEAFMGLKANILVQEYIKEAGGADIRCLVVGGKVIAAMKRQGAEGEFRSNLHRGGTASLIRLSPEERRTAVEAAKVMGLNMCGVDILRSNNGPLIMEVNSSPGLEGIESATGKDVASMIIKHIEKTAFLSSTKTKGKG.

The ATP-grasp domain occupies 104-287 (LQLMSRKGLG…VASMIIKHIE (184 aa)). Residues Lys141, 178 to 179 (EY), Asp187, and 211 to 213 (RSN) each bind ATP. Mg(2+) is bound by residues Asp248, Glu260, and Asn262. Mn(2+)-binding residues include Asp248, Glu260, and Asn262.

Belongs to the RimK family. It depends on Mg(2+) as a cofactor. Mn(2+) serves as cofactor.

This is Probable alpha-L-glutamate ligase from Marinomonas sp. (strain MWYL1).